Reading from the N-terminus, the 346-residue chain is Dihydroorotase (346 aa).

The Zn(2+) site is built by H17 and H19. Substrate-binding positions include 19–21 (HVR) and N45. K102, H139, and H177 together coordinate Zn(2+). K102 is subject to N6-carboxylysine. Residue H139 coordinates substrate. Residue L222 participates in substrate binding. D250 is a Zn(2+) binding site. D250 is an active-site residue. H254 and A266 together coordinate substrate.

This sequence belongs to the metallo-dependent hydrolases superfamily. DHOase family. Class II DHOase subfamily. In terms of assembly, homodimer. Zn(2+) serves as cofactor.

It catalyses the reaction (S)-dihydroorotate + H2O = N-carbamoyl-L-aspartate + H(+). The protein operates within pyrimidine metabolism; UMP biosynthesis via de novo pathway; (S)-dihydroorotate from bicarbonate: step 3/3. Functionally, catalyzes the reversible cyclization of carbamoyl aspartate to dihydroorotate. This chain is Dihydroorotase, found in Delftia acidovorans (strain DSM 14801 / SPH-1).